A 297-amino-acid chain; its full sequence is Phosphatidylserine decarboxylase proenzyme (297 aa).

Active-site charge relay system; for autoendoproteolytic cleavage activity residues include Asp-100, His-157, and Ser-263. The active-site Schiff-base intermediate with substrate; via pyruvic acid; for decarboxylase activity is the Ser-263. The residue at position 263 (Ser-263) is a Pyruvic acid (Ser); by autocatalysis.

It belongs to the phosphatidylserine decarboxylase family. PSD-B subfamily. Prokaryotic type I sub-subfamily. In terms of assembly, heterodimer of a large membrane-associated beta subunit and a small pyruvoyl-containing alpha subunit. The cofactor is pyruvate. In terms of processing, is synthesized initially as an inactive proenzyme. Formation of the active enzyme involves a self-maturation process in which the active site pyruvoyl group is generated from an internal serine residue via an autocatalytic post-translational modification. Two non-identical subunits are generated from the proenzyme in this reaction, and the pyruvate is formed at the N-terminus of the alpha chain, which is derived from the carboxyl end of the proenzyme. The autoendoproteolytic cleavage occurs by a canonical serine protease mechanism, in which the side chain hydroxyl group of the serine supplies its oxygen atom to form the C-terminus of the beta chain, while the remainder of the serine residue undergoes an oxidative deamination to produce ammonia and the pyruvoyl prosthetic group on the alpha chain. During this reaction, the Ser that is part of the protease active site of the proenzyme becomes the pyruvoyl prosthetic group, which constitutes an essential element of the active site of the mature decarboxylase.

The protein localises to the cell membrane. The enzyme catalyses a 1,2-diacyl-sn-glycero-3-phospho-L-serine + H(+) = a 1,2-diacyl-sn-glycero-3-phosphoethanolamine + CO2. The protein operates within phospholipid metabolism; phosphatidylethanolamine biosynthesis; phosphatidylethanolamine from CDP-diacylglycerol: step 2/2. Catalyzes the formation of phosphatidylethanolamine (PtdEtn) from phosphatidylserine (PtdSer). The protein is Phosphatidylserine decarboxylase proenzyme of Haemophilus ducreyi (strain 35000HP / ATCC 700724).